The following is a 156-amino-acid chain: Small ribosomal subunit protein uS7 (156 aa).

It belongs to the universal ribosomal protein uS7 family. Part of the 30S ribosomal subunit. Contacts proteins S9 and S11.

One of the primary rRNA binding proteins, it binds directly to 16S rRNA where it nucleates assembly of the head domain of the 30S subunit. Is located at the subunit interface close to the decoding center, probably blocks exit of the E-site tRNA. The polypeptide is Small ribosomal subunit protein uS7 (Corynebacterium jeikeium (strain K411)).